The following is a 198-amino-acid chain: Adenylyl-sulfate kinase (198 aa).

31–38 (GLSGAGKS) is an ATP binding site. Residue serine 105 is the Phosphoserine intermediate of the active site.

Belongs to the APS kinase family.

It catalyses the reaction adenosine 5'-phosphosulfate + ATP = 3'-phosphoadenylyl sulfate + ADP + H(+). Its pathway is sulfur metabolism; hydrogen sulfide biosynthesis; sulfite from sulfate: step 2/3. Catalyzes the synthesis of activated sulfate. This Shewanella amazonensis (strain ATCC BAA-1098 / SB2B) protein is Adenylyl-sulfate kinase.